Consider the following 172-residue polypeptide: ATP-dependent kinase-like protein notR' (172 aa).

This sequence belongs to the YFH7 family.

Its function is as follows. ATP-dependent kinase-like protein; part of the gene cluster that mediates the biosynthesis of notoamide, a fungal indole alkaloid that belongs to a family of natural products containing a characteristic bicyclo[2.2.2]diazaoctane core. The first step of notoamide biosynthesis involves coupling of L-proline and L-tryptophan by the bimodular NRPS notE', to produce cyclo-L-tryptophan-L-proline called brevianamide F. The reverse prenyltransferase notF' then acts as a deoxybrevianamide E synthase and converts brevianamide F to deoxybrevianamide E via reverse prenylation at C-2 of the indole ring leading to the bicyclo[2.2.2]diazaoctane core. Deoxybrevianamide E is further hydroxylated at C-6 of the indole ring, likely catalyzed by the cytochrome P450 monooxygenase notG', to yield 6-hydroxy-deoxybrevianamide E. 6-hydroxy-deoxybrevianamide E is a specific substrate of the prenyltransferase notC' for normal prenylation at C-7 to produce 6-hydroxy-7-prenyl-deoxybrevianamide, also called notoamide S. As the proposed pivotal branching point in notoamide biosynthesis, notoamide S can be diverted to notoamide E through an oxidative pyran ring closure putatively catalyzed by either notH' cytochrome P450 monooxygenase or the notD' FAD-linked oxidoreductase. This step would be followed by an indole 2,3-epoxidation-initiated pinacol-like rearrangement catalyzed by the notB' FAD-dependent monooxygenase leading to the formation of notoamide C and notoamide D. On the other hand notoamide S is converted to notoamide T by notH' (or notD'), a bifunctional oxidase that also functions as the intramolecular Diels-Alderase responsible for generation of (-)-notoamide T. To generate antipodal (+)-notoaminide T, notH (or notD) in Aspergillus strain MF297-2 is expected to catalyze a Diels-Alder reaction leading to the opposite stereochemistry. The remaining oxidoreductase notD' (or notH') likely catalyzes the oxidative pyran ring formation to yield (-)-stephacidin A. The FAD-dependent monooxygenase notI' is highly similar to notB' and is predicted to catalyze a similar conversion from (-)-stephacidin A to (+)-notoamide B via the 2,3-epoxidation of (-)-stephacidin A followed by a pinacol-type rearrangement. Finally, it remains unclear which enzyme could be responsible for the final hydroxylation steps leading to notoamide A and sclerotiamide. The function of notQ' in the notoamide biosynthesis has not been determined yet. This is ATP-dependent kinase-like protein notR' from Aspergillus versicolor.